A 362-amino-acid polypeptide reads, in one-letter code: Probable non-structural 41.0 kDa protein (362 aa).

The segment at 341–362 (MNAAAPSAPTPTELPVFSPPSS) is disordered.

In Maize rough dwarf virus (MRDV), this protein is Probable non-structural 41.0 kDa protein (S6).